We begin with the raw amino-acid sequence, 475 residues long: UDP-glucosyltransferase UGT13248 (475 aa).

Positions 1 to 17 (METTVTAVSGTTSSSVG) are enriched in low complexity. The interval 1 to 20 (METTVTAVSGTTSSSVGHGA) is disordered. UDP-alpha-D-glucose-binding positions include H38, S152, T299, C352, 369–377 (HCGWNSTLE), and 393–394 (DQ).

The protein belongs to the UDP-glycosyltransferase family.

Functionally, involved in the detoxification of the Fusarium mycotoxin deoxynivalenol by the transfer of glucose from UDP-D-glucose to the hydroxyl group at C-3, forming deoxynivalenol-3-O-beta-D-glucoside. The polypeptide is UDP-glucosyltransferase UGT13248 (Hordeum vulgare subsp. vulgare (Domesticated barley)).